An 848-amino-acid polypeptide reads, in one-letter code: ATP-dependent Clp protease ATP-binding subunit ClpC1 (848 aa).

Residues 2 to 144 (FERFTDRARK…RQQVIQLLSG (143 aa)) enclose the Clp R domain. Repeat stretches follow at residues 5-70 (FTDR…IGQG) and 80-144 (FTPR…LLSG). Residues 171-418 (LDQFGRNLTA…RMRIRRMTAP (248 aa)) form an i region. ATP is bound at residue 216–223 (GEPGVGKT). Residues 425–460 (DEKIAEARREKESAIDAQDFEKAASLRDREKTLVAQ) form the UVR domain. The II stretch occupies residues 479–670 (VDDEQIAEVL…VLIFTSNLGT (192 aa)). 553–560 (GPSGVGKT) provides a ligand contact to ATP. Residues 821–848 (TGTRKPPAEPDLAKAGAHSAGGPEPAAR) are disordered.

It belongs to the ClpA/ClpB family. ClpC subfamily.

Its function is as follows. ATP-dependent specificity component of the Clp protease. It directs the protease to specific substrates. Can perform chaperone functions in the absence of ClpP. The protein is ATP-dependent Clp protease ATP-binding subunit ClpC1 (clpC1) of Mycobacterium tuberculosis (strain CDC 1551 / Oshkosh).